We begin with the raw amino-acid sequence, 632 residues long: Extracellular metalloproteinase 5 (632 aa).

An N-terminal signal peptide occupies residues 1-20; sequence MHGLLLAAGLLSLPLHVLAH. Residues 21 to 244 constitute a propeptide that is removed on maturation; sequence PQPGTSLAGR…HNVVDYVSHA (224 aa). Asn284 carries N-linked (GlcNAc...) asparagine glycosylation. A Zn(2+)-binding site is contributed by His427. Glu428 is a catalytic residue. His431 serves as a coordination point for Zn(2+). Asn591 and Asn620 each carry an N-linked (GlcNAc...) asparagine glycan.

It belongs to the peptidase M36 family. The cofactor is Zn(2+).

Its subcellular location is the secreted. In terms of biological role, secreted metalloproteinase probably acting as a virulence factor. The protein is Extracellular metalloproteinase 5 (MEP5) of Arthroderma otae (strain ATCC MYA-4605 / CBS 113480) (Microsporum canis).